Reading from the N-terminus, the 249-residue chain is Bax inhibitor 1 (249 aa).

The next 6 membrane-spanning stretches (helical) occupy residues 39–59 (LVYL…YLHV), 65–85 (GMLT…VPVF), 93–113 (ILLA…KLAV), 119–139 (ILVT…CAAI), 151–171 (GLLS…SIFG), and 213–233 (HALT…VIML).

This sequence belongs to the BI1 family. Ubiquitous.

It localises to the membrane. Suppressor of apoptosis. This chain is Bax inhibitor 1 (BI1), found in Oryza sativa subsp. japonica (Rice).